Consider the following 256-residue polypeptide: uncharacterized protein (256 aa).

Disordered regions lie at residues 1-38 (MGKT…PNRD) and 51-75 (PRPS…RCPQ).

This is an uncharacterized protein from Homo sapiens (Human).